The following is a 348-amino-acid chain: Rhodopsin (348 aa).

Methionine 1 is subject to N-acetylmethionine. The Extracellular segment spans residues 1–36; it reads MNGTEGLNFYVPFSNKTGVVRSPFEYPQYYLAEPWQ. Residues asparagine 2 and asparagine 15 are each glycosylated (N-linked (GlcNAc...) asparagine). Residues 37–61 traverse the membrane as a helical segment; that stretch reads FSVLAAYMFLLIVLGFPINFLTLYV. Residues 62–73 are Cytoplasmic-facing; it reads TVQHKKLRTPLN. The helical transmembrane segment at 74–99 threads the bilayer; sequence YILLNLAVANLFMVFGGFTTTLYTSL. Over 100–111 the chain is Extracellular; sequence HAYFVFGPTGCN. An intrachain disulfide couples cysteine 110 to cysteine 187. Residues 112–133 form a helical membrane-spanning segment; it reads LEGFFATLGGEIALWSLVVLAI. Positions 134 to 136 match the 'Ionic lock' involved in activated form stabilization motif; that stretch reads ERY. Residues 134–152 are Cytoplasmic-facing; the sequence is ERYVVVCKPMSNFRFGENH. A helical transmembrane segment spans residues 153 to 173; that stretch reads AIMGLALTWIMAMACAAAPLV. At 174 to 202 the chain is on the extracellular side; sequence GWSRYIPEGMQCSCGIDYYTSRQEVNNES. Glutamate 201 is a Zn(2+) binding site. The chain crosses the membrane as a helical span at residues 203-227; the sequence is FVIYMFVVHFTIPLVIIFFCYGQLV. Topologically, residues 228–252 are cytoplasmic; the sequence is FTVKEAAAQQQESATTQKAEKEVTR. The chain crosses the membrane as a helical span at residues 253 to 274; that stretch reads MVIIMVVAFLICWVPYASVAFY. Residues 275–286 are Extracellular-facing; the sequence is IFTHQGSDFGPI. A Zn(2+)-binding site is contributed by glutamine 279. The chain crosses the membrane as a helical span at residues 287 to 306; the sequence is FMTIPSFFAKSSSIYNPVIY. An N6-(retinylidene)lysine modification is found at lysine 296. Residues 307 to 348 are Cytoplasmic-facing; that stretch reads IMMNKQFRNCMLTTLCCGRNPLGDDEASTTASKTETSQVAPA. S-palmitoyl cysteine attachment occurs at residues cysteine 322 and cysteine 323. Serine 334 bears the Phosphoserine mark. 2 positions are modified to phosphothreonine: threonine 335 and threonine 336. The residue at position 338 (serine 338) is a Phosphoserine. A phosphothreonine mark is found at threonine 340 and threonine 342. Serine 343 is modified (phosphoserine).

The protein belongs to the G-protein coupled receptor 1 family. Opsin subfamily. Homodimer. May form a complex composed of RHO, GRK1 and RCVRN in a Ca(2+)-dependent manner; RCVRN prevents the interaction between GRK1 and RHO. Interacts with GRK1. Interacts (phosphorylated form) with SAG. Interacts with GNAT1. Interacts with GNAT3. SAG and G-proteins compete for a common binding site. Interacts with PRCD; the interaction promotes PRCD stability. Forms a complex with ASAP1 and ARF4. Forms a complex with ASAP1, RAB11A, Rabin8/RAB3IP, ARF4 and RAB11FIP3; the complex regulates Golgi-to-cilia rhodopsin/RHO transport in photoreceptors. Contains one covalently linked retinal chromophore. Upon light absorption, the covalently bound 11-cis-retinal is converted to all-trans-retinal. After hydrolysis of the Schiff base and release of the covalently bound all-trans-retinal, active rhodopsin is regenerated by binding of a fresh molecule of 11-cis-retinal.

The protein resides in the membrane. Its subcellular location is the cell projection. The protein localises to the cilium. It localises to the photoreceptor outer segment. Functionally, photoreceptor required for image-forming vision at low light intensity. Light-induced isomerization of 11-cis to all-trans retinal triggers a conformational change that activates signaling via G-proteins. Signaling mediates the activation of phospholipase C. Subsequent receptor phosphorylation mediates displacement of the bound G-protein alpha subunit by arrestin and terminates signaling. The polypeptide is Rhodopsin (RHO) (Tursiops truncatus (Atlantic bottle-nosed dolphin)).